Here is a 178-residue protein sequence, read N- to C-terminus: Interleukin-10 (178 aa).

The signal sequence occupies residues M1 to I18. The N-linked (GlcNAc...) asparagine glycan is linked to N29. 2 disulfide bridges follow: C30-C126 and C80-C132. A glycan (N-linked (GlcNAc...) asparagine) is linked at N134.

The protein belongs to the IL-10 family. In terms of assembly, homodimer. Interacts with IL10RA and IL10RB.

It is found in the secreted. In terms of biological role, major immune regulatory cytokine that acts on many cells of the immune system where it has profound anti-inflammatory functions, limiting excessive tissue disruption caused by inflammation. Mechanistically, IL10 binds to its heterotetrameric receptor comprising IL10RA and IL10RB leading to JAK1 and STAT2-mediated phosphorylation of STAT3. In turn, STAT3 translocates to the nucleus where it drives expression of anti-inflammatory mediators. Targets antigen-presenting cells (APCs) such as macrophages and monocytes and inhibits their release of pro-inflammatory cytokines including granulocyte-macrophage colony-stimulating factor /GM-CSF, granulocyte colony-stimulating factor/G-CSF, IL-1 alpha, IL-1 beta, IL-6, IL-8 and TNF-alpha. Also interferes with antigen presentation by reducing the expression of MHC-class II and co-stimulatory molecules, thereby inhibiting their ability to induce T cell activation. In addition, controls the inflammatory response of macrophages by reprogramming essential metabolic pathways including mTOR signaling. In Mus musculus (Mouse), this protein is Interleukin-10 (Il10).